The following is a 416-amino-acid chain: E3 ubiquitin-protein ligase makorin-2 (416 aa).

2 C3H1-type zinc fingers span residues 2–29 and 31–58; these read STKQ…HDLA and SKPS…HTKP. Residues 61-144 form a disordered region; that stretch reads AAGGAVGPAP…DPQTSPEMKP (84 aa). Over residues 95–123 the composition is skewed to basic and acidic residues; sequence HSNEPGKREKKTLVLRDRNLTGLAEDKTP. S139 bears the Phosphoserine mark. The segment at 165–192 adopts a C3H1-type 3 zinc-finger fold; it reads SNEPQLCPYAAAGECRFGDACVYLHGDM. Residues 193-222 are makorin-type Cys-His; it reads CEICRLQVLHPFDPEQRKAHEKMCMSTFEH. The RING-type zinc finger occupies 238-292; the sequence is CSICMEVILEKASASERRFGILSNCSHTYCLSCIRQWRCAKQFENPIIKSCPECR. Residues 321–350 form a C3H1-type 4 zinc finger; sequence GMGKKACKYFEQGKGTCPFGSKCLYRHAYP.

As to quaternary structure, interacts with PDLIM2 (via LIM zinc-binding domain). Interacts with RELA. In terms of tissue distribution, highly expressed in the testis, and lower expression in the brain, thymus, heart, lung, liver, spleen, kidney, ovary, uterus, and seminal vesicle (at protein level). Expressed in primary immune cells, such as CD4-positive and CD8-positive T cells, CD19-positive B cells and CD11c-positive dendritic cells, and in embryonic fibroblasts (at protein level).

It is found in the cytoplasm. It localises to the nucleus. The enzyme catalyses S-ubiquitinyl-[E2 ubiquitin-conjugating enzyme]-L-cysteine + [acceptor protein]-L-lysine = [E2 ubiquitin-conjugating enzyme]-L-cysteine + N(6)-ubiquitinyl-[acceptor protein]-L-lysine.. Its pathway is protein modification; protein ubiquitination. Its function is as follows. E3 ubiquitin ligase catalyzing the covalent attachment of ubiquitin moieties onto substrate proteins. Promotes the polyubiquitination and proteasome-dependent degradation of RELA/p65, thereby suppressing RELA-mediated NF-kappa-B transactivation and negatively regulating inflammatory responses. Plays a role in the regulation of spermiation and in male fertility. In Mus musculus (Mouse), this protein is E3 ubiquitin-protein ligase makorin-2 (Mkrn2).